Consider the following 73-residue polypeptide: Large ribosomal subunit protein bL31 (73 aa).

Zn(2+)-binding residues include cysteine 16, cysteine 18, cysteine 37, and cysteine 40.

It belongs to the bacterial ribosomal protein bL31 family. Type A subfamily. Part of the 50S ribosomal subunit. Zn(2+) serves as cofactor.

Functionally, binds the 23S rRNA. The sequence is that of Large ribosomal subunit protein bL31 from Pseudomonas syringae pv. syringae (strain B728a).